A 495-amino-acid chain; its full sequence is Keratin, type II cuticular 87 (495 aa).

Residues 1-111 (MSCFSSRLGA…PNAQCVKHEE (111 aa)) are head. The region spanning 111-422 (EKEQIKCLNS…RLLEGEEQRL (312 aa)) is the IF rod domain. Residues 112–146 (KEQIKCLNSKFAAFIDKVRFLEQQNKLLETKWQFY) form a coil 1A region. Residues 147–156 (QNRKCCESNM) are linker 1. Residues 157-257 (EPLFEGYIEA…YEEETRLLHS (101 aa)) are coil 1B. The linker 12 stretch occupies residues 258–274 (HISDTSVVVKMDNSRDL). A coil 2 region spans residues 275–418 (NMDCVVAEIK…ITYRRLLEGE (144 aa)). A tail region spans residues 419–494 (EQRLCEGVGS…TCGSSRSVRF (76 aa)).

Belongs to the intermediate filament family. As to quaternary structure, heterotetramer of two type I and two type II keratins.

The protein is Keratin, type II cuticular 87 of Mus musculus (Mouse).